Consider the following 206-residue polypeptide: Large ribosomal subunit protein uL4 (206 aa).

A disordered region spans residues 47-94 (NRAQKGRAEVSKSTRKPWRQKGTGRARAGMASSPLWRGGGRVFPNSPE). Over residues 59 to 70 (STRKPWRQKGTG) the composition is skewed to basic residues.

The protein belongs to the universal ribosomal protein uL4 family. Part of the 50S ribosomal subunit.

Functionally, one of the primary rRNA binding proteins, this protein initially binds near the 5'-end of the 23S rRNA. It is important during the early stages of 50S assembly. It makes multiple contacts with different domains of the 23S rRNA in the assembled 50S subunit and ribosome. In terms of biological role, forms part of the polypeptide exit tunnel. The polypeptide is Large ribosomal subunit protein uL4 (Aromatoleum aromaticum (strain DSM 19018 / LMG 30748 / EbN1) (Azoarcus sp. (strain EbN1))).